The chain runs to 156 residues: Small ribosomal subunit protein uS7 (156 aa).

Belongs to the universal ribosomal protein uS7 family. In terms of assembly, part of the 30S ribosomal subunit. Contacts proteins S9 and S11.

Functionally, one of the primary rRNA binding proteins, it binds directly to 16S rRNA where it nucleates assembly of the head domain of the 30S subunit. Is located at the subunit interface close to the decoding center, probably blocks exit of the E-site tRNA. In Maridesulfovibrio salexigens (strain ATCC 14822 / DSM 2638 / NCIMB 8403 / VKM B-1763) (Desulfovibrio salexigens), this protein is Small ribosomal subunit protein uS7.